The sequence spans 248 residues: Thioesterase FSL2 (248 aa).

Catalysis depends on charge relay system residues serine 125, aspartate 195, and histidine 223.

Belongs to the LovG family.

It functions in the pathway secondary metabolite biosynthesis. Thioesterase; part of the gene cluster that mediates the biosynthesis of fusarielins F, G and H, decaketide compounds with 5 methylations and a decaline core that act as mycoestrogens as they stimulate growth of MCF-7 breast cancer cells. The initial compound in the pathway is produced by the reducing polyketide synthase FSL1. FSL1 lacks an active enoyl reductase (ER) domain and biosynthesis of fusarielins relies on the trans-acting enoyl reductase FSL5, before it is released through hydrolysis catalyzed by the thioesterase FSL2. Fusarielins F, G, and H have a C11=C12 cis double bond and is fully reduced between C10 and C11 and between C12 and C13. FSL3 can be involved in the formation of the C11=C12 cis double bond by moving a hypothetical C10=C11 or C12=C13 trans double bond to form prefusarielin. Prefusarielin is oxygenated at C15 and C16 by the cytochrome P450 monooxygenase FSL4, resulting in fusarielin F, which subsequently is epoxidized into fusarielin G by the same enzyme. The final step in the pathway is a reduction of the carboxylic acid moiety to yield fusarielin H via a still undetermined mechanism. The sequence is that of Thioesterase FSL2 from Gibberella zeae (strain ATCC MYA-4620 / CBS 123657 / FGSC 9075 / NRRL 31084 / PH-1) (Wheat head blight fungus).